A 304-amino-acid chain; its full sequence is UDP-N-acetylenolpyruvoylglucosamine reductase (304 aa).

Residues 33-198 enclose the FAD-binding PCMH-type domain; the sequence is RVGGPADILV…IEATIELESG (166 aa). The active site involves Arg177. Ser227 (proton donor) is an active-site residue. Glu297 is a catalytic residue.

This sequence belongs to the MurB family. FAD is required as a cofactor.

The protein localises to the cytoplasm. It carries out the reaction UDP-N-acetyl-alpha-D-muramate + NADP(+) = UDP-N-acetyl-3-O-(1-carboxyvinyl)-alpha-D-glucosamine + NADPH + H(+). The protein operates within cell wall biogenesis; peptidoglycan biosynthesis. In terms of biological role, cell wall formation. This Clostridium perfringens (strain SM101 / Type A) protein is UDP-N-acetylenolpyruvoylglucosamine reductase.